Consider the following 472-residue polypeptide: Transmembrane protein 8B (472 aa).

A disordered region spans residues 1–37 (MNMPQSLGNQPLPPEPPSLRTPAEGPGATSPPEHCWP). At 1-233 (MNMPQSLGNQ…ADALTYGFQL (233 aa)) the chain is on the extracellular side. N-linked (GlcNAc...) asparagine glycans are attached at residues asparagine 92 and asparagine 100. Positions 182 to 221 (FLSPCVDDCGPYGQCKLLRTHNYLYAACECKAGWRGWGCT) constitute an EGF-like domain. Intrachain disulfides connect cysteine 186/cysteine 196, cysteine 190/cysteine 209, and cysteine 211/cysteine 220. Residues 234–254 (LSTLLLCLSNLMFLPPVVLAI) form a helical membrane-spanning segment. Over 255–257 (RSR) the chain is Cytoplasmic. The chain crosses the membrane as a helical span at residues 258–277 (YVLEAAVYTFTMFFSTFYHA). The Extracellular segment spans residues 278–292 (CDQPGIVVFCIMDYD). Residues 293–313 (VLQFCDFLGSLMSVWVTVIAM) traverse the membrane as a helical segment. The Cytoplasmic segment spans residues 314 to 315 (AR). Residues 316 to 336 (LQPVVKQVLYLLGAMLLSMAL) traverse the membrane as a helical segment. At 337–342 (QLDRHG) the chain is on the extracellular side. The chain crosses the membrane as a helical span at residues 343–363 (LWNLLGPSLFALGILATAWTV). Residues 364–379 (RSVRRRHCYPPTWRRW) lie on the Cytoplasmic side of the membrane. A helical membrane pass occupies residues 380-400 (LFCLCPGSLIAGSAILLYAFV). The Extracellular segment spans residues 401–405 (ETRDN). A helical membrane pass occupies residues 406–426 (YFYIHSIWHMLIAGSVGFLLP). The Cytoplasmic portion of the chain corresponds to 427-472 (PRAKTDRRVPSGARARGCGYQLCINEQEELGLVGPGGATVSSICAS).

Belongs to the TMEM8 family. May interact with EZR. Post-translationally, N-glycosylated.

It localises to the cell membrane. The protein resides in the cytoplasm. The protein localises to the nucleus. It is found in the mitochondrion. Its subcellular location is the endoplasmic reticulum. In terms of biological role, may function as a regulator of the EGFR pathway. Probable tumor suppressor which may function in cell growth, proliferation and adhesion. This chain is Transmembrane protein 8B (TMEM8B), found in Bos taurus (Bovine).